Consider the following 94-residue polypeptide: Large ribosomal subunit protein eL42 (94 aa).

Zn(2+)-binding residues include cysteine 11, cysteine 14, cysteine 71, and cysteine 74. Residues 11 to 74 (CPFCKRHTIH…LDLRFRCTVC (64 aa)) form a C4-type zinc finger.

The protein belongs to the eukaryotic ribosomal protein eL42 family. In terms of assembly, part of the 50S ribosomal subunit. Zn(2+) serves as cofactor.

Functionally, binds to the 23S rRNA. This Thermococcus kodakarensis (strain ATCC BAA-918 / JCM 12380 / KOD1) (Pyrococcus kodakaraensis (strain KOD1)) protein is Large ribosomal subunit protein eL42.